Reading from the N-terminus, the 309-residue chain is Coenzyme PQQ synthesis protein B (309 aa).

It belongs to the PqqB family.

It functions in the pathway cofactor biosynthesis; pyrroloquinoline quinone biosynthesis. In terms of biological role, may be involved in the transport of PQQ or its precursor to the periplasm. The protein is Coenzyme PQQ synthesis protein B of Nitrosococcus oceani (strain ATCC 19707 / BCRC 17464 / JCM 30415 / NCIMB 11848 / C-107).